Consider the following 573-residue polypeptide: Acetolactate synthase large subunit (573 aa).

Residue Glu-51 coordinates thiamine diphosphate. FAD-binding positions include Arg-153, 261–282 (HGTLEANTAMHESDLILGIGVR), and 304–323 (DIDPTSISKNVPVAIPIVGN). The tract at residues 396-476 (QHQMFAALHY…VVIICLNNHF (81 aa)) is thiamine pyrophosphate binding. Positions 447 and 474 each coordinate Mg(2+).

The protein belongs to the TPP enzyme family. In terms of assembly, dimer of large and small chains. The cofactor is Mg(2+). Thiamine diphosphate is required as a cofactor.

The catalysed reaction is 2 pyruvate + H(+) = (2S)-2-acetolactate + CO2. The protein operates within amino-acid biosynthesis; L-isoleucine biosynthesis; L-isoleucine from 2-oxobutanoate: step 1/4. It participates in amino-acid biosynthesis; L-valine biosynthesis; L-valine from pyruvate: step 1/4. The protein is Acetolactate synthase large subunit (ilvI) of Haemophilus influenzae (strain ATCC 51907 / DSM 11121 / KW20 / Rd).